The chain runs to 311 residues: Methionyl-tRNA formyltransferase (311 aa).

110–113 (SLLP) is a binding site for (6S)-5,6,7,8-tetrahydrofolate.

It belongs to the Fmt family.

It catalyses the reaction L-methionyl-tRNA(fMet) + (6R)-10-formyltetrahydrofolate = N-formyl-L-methionyl-tRNA(fMet) + (6S)-5,6,7,8-tetrahydrofolate + H(+). Functionally, attaches a formyl group to the free amino group of methionyl-tRNA(fMet). The formyl group appears to play a dual role in the initiator identity of N-formylmethionyl-tRNA by promoting its recognition by IF2 and preventing the misappropriation of this tRNA by the elongation apparatus. The polypeptide is Methionyl-tRNA formyltransferase (Streptococcus equi subsp. equi (strain 4047)).